Reading from the N-terminus, the 629-residue chain is Iron multicopper oxidase fer1 (629 aa).

An N-terminal signal peptide occupies residues 1-29 (MVAPQRRTVMPALGLLASSLCSLLLTANA). Plastocyanin-like domains are found at residues 44–164 (VNPD…IHPD) and 175–338 (DDYT…TISY). N58 and N69 each carry an N-linked (GlcNAc...) asparagine glycan. The Cu cation site is built by H91 and H93. N-linked (GlcNAc...) asparagine glycosylation occurs at N98. Residues H144 and H146 each contribute to the Cu cation site. Residues N188, N222, N236, N253, N303, N331, and N398 are each glycosylated (N-linked (GlcNAc...) asparagine). The 137-residue stretch at 401 to 537 (YVAPQVPALF…LASIFIEAPD (137 aa)) folds into the Plastocyanin-like 3 domain. The Cu cation site is built by H452, H455, and H457. N-linked (GlcNAc...) asparagine glycosylation occurs at N482. Cu cation-binding residues include H517, C518, H519, and H523. N-linked (GlcNAc...) asparagine glycosylation is present at N569. A helical membrane pass occupies residues 592 to 612 (AIAAFTGCIITGLLGLATVVV).

This sequence belongs to the multicopper oxidase family. Cu cation serves as cofactor.

It is found in the cell membrane. Iron transport multicopper oxidase, which is required for Fe(2+) high affinity uptake. May be required to oxidize Fe(2+) and release it from the transporter. Essential component of copper-dependent iron transport. The chain is Iron multicopper oxidase fer1 from Mycosarcoma maydis (Corn smut fungus).